The chain runs to 106 residues: ATP-dependent Clp protease adapter protein ClpS (106 aa).

The segment at 1–22 (MTDEPNQDDPQGPEVEAAKPSL) is disordered.

Belongs to the ClpS family. Binds to the N-terminal domain of the chaperone ClpA.

Involved in the modulation of the specificity of the ClpAP-mediated ATP-dependent protein degradation. This is ATP-dependent Clp protease adapter protein ClpS from Halorhodospira halophila (strain DSM 244 / SL1) (Ectothiorhodospira halophila (strain DSM 244 / SL1)).